The following is a 351-amino-acid chain: Histidinol-phosphate aminotransferase (351 aa).

Lys213 carries the N6-(pyridoxal phosphate)lysine modification.

It belongs to the class-II pyridoxal-phosphate-dependent aminotransferase family. Histidinol-phosphate aminotransferase subfamily. Homodimer. Pyridoxal 5'-phosphate serves as cofactor.

The catalysed reaction is L-histidinol phosphate + 2-oxoglutarate = 3-(imidazol-4-yl)-2-oxopropyl phosphate + L-glutamate. It carries out the reaction L-histidine + 2-oxoglutarate = 3-(imidazol-5-yl)pyruvate + L-glutamate. It functions in the pathway amino-acid biosynthesis; L-histidine biosynthesis; L-histidine from 5-phospho-alpha-D-ribose 1-diphosphate: step 7/9. The polypeptide is Histidinol-phosphate aminotransferase (Caldanaerobacter subterraneus subsp. tengcongensis (strain DSM 15242 / JCM 11007 / NBRC 100824 / MB4) (Thermoanaerobacter tengcongensis)).